The sequence spans 722 residues: Probable glycerol-3-phosphate dehydrogenase, mitochondrial (722 aa).

Residues 1–43 constitute a mitochondrion transit peptide; it reads MSWVRFTKTGVAVVATSAAAVLALDMTNERRFQRQVKDHFRTV. 76–104 is an FAD binding site; the sequence is DVLIIGGGATGAGVALDAQTRGLKTALVE. 2 consecutive EF-hand domains span residues 624-659 and 660-695; these read EEMQ…HNQK and IDER…LKGG. Ca(2+) contacts are provided by Asp673, Asn675, Asn677, Glu679, and Glu684.

This sequence belongs to the FAD-dependent glycerol-3-phosphate dehydrogenase family. The cofactor is FAD.

It is found in the mitochondrion. It catalyses the reaction a quinone + sn-glycerol 3-phosphate = dihydroxyacetone phosphate + a quinol. Its pathway is polyol metabolism; glycerol degradation via glycerol kinase pathway; glycerone phosphate from sn-glycerol 3-phosphate (anaerobic route): step 1/1. Its activity is regulated as follows. Calcium-binding enhances the activity of the enzyme. The polypeptide is Probable glycerol-3-phosphate dehydrogenase, mitochondrial (Caenorhabditis elegans).